A 439-amino-acid polypeptide reads, in one-letter code: D-erythronate kinase (439 aa).

ATP is bound by residues Ser253, 366–369 (GGDV), and Gly412.

It belongs to the four-carbon acid sugar kinase family.

The catalysed reaction is D-erythronate + ATP = 4-phospho-D-erythronate + ADP + H(+). Catalyzes the ATP-dependent phosphorylation of D-erythronate to D-erythronate 4-phosphate. Can also phosphorylate D-threonate and 4-hydroxy-L-threonine, with lower efficiency. This chain is D-erythronate kinase, found in Heliobacterium modesticaldum (strain ATCC 51547 / Ice1).